The chain runs to 1174 residues: Lysylphosphatidylglycerol biosynthesis bifunctional protein LysX (1174 aa).

Residues 1-665 are phosphatidylglycerol lysyltransferase; sequence MGVGLHLTVP…LLHHDGSAPD (665 aa). A disordered region spans residues 9–36; it reads VPGLRRDGRGVQSNSHDTSSKTTADISR. The segment covering 19-33 has biased composition (polar residues); it reads VQSNSHDTSSKTTAD. Transmembrane regions (helical) follow at residues 82–102, 124–144, 148–168, 179–199, 216–236, 274–294, and 614–634; these read VPAA…LASV, FPDT…ALTA, IAWL…AAEI, FGEN…VLGY, AVWL…VELF, AIFG…LFLS, and VIPR…LPFS. Residues 666-1174 form a lysine--tRNA ligase region; that stretch reads VSGLRQVGLT…TLPFPLAKPH (509 aa). The segment at residues 728-806 is a DNA-binding region (OB); sequence VSVSGRIMRI…SLIVSGWRLI (79 aa). Mg(2+)-binding residues include Asp1086 and Glu1093.

The protein in the N-terminal section; belongs to the LPG synthetase family. This sequence in the C-terminal section; belongs to the class-II aminoacyl-tRNA synthetase family. Mg(2+) serves as cofactor.

The protein resides in the cell membrane. It catalyses the reaction tRNA(Lys) + L-lysine + ATP = L-lysyl-tRNA(Lys) + AMP + diphosphate. The enzyme catalyses L-lysyl-tRNA(Lys) + a 1,2-diacyl-sn-glycero-3-phospho-(1'-sn-glycerol) = a 1,2-diacyl-sn-glycero-3-phospho-1'-(3'-O-L-lysyl)-sn-glycerol + tRNA(Lys). In terms of biological role, catalyzes the production of L-lysyl-tRNA(Lys)transfer and the transfer of a lysyl group from L-lysyl-tRNA(Lys) to membrane-bound phosphatidylglycerol (PG), which produces lysylphosphatidylglycerol (LPG), one of the components of the bacterial membrane with a positive net charge. LPG synthesis contributes to the resistance to cationic antimicrobial peptides (CAMPs) and likely protects M.tuberculosis against the CAMPs produced by competiting microorganisms (bacteriocins). In fact, the modification of anionic phosphatidylglycerol with positively charged L-lysine results in repulsion of the peptides. In Mycobacterium tuberculosis (strain KZN 1435 / MDR), this protein is Lysylphosphatidylglycerol biosynthesis bifunctional protein LysX (lysX).